A 306-amino-acid polypeptide reads, in one-letter code: MTSQAATTTTTAAAAAAWTREDDKAFENALAACAAPPPADGGAPDDDWFAALAASVPGARSAEEVRRHYEALVEDVAAIDAGRVPLPRYAGEESAAPPDGAGAAAAASKDGGHRRDERKGGGGGYDGGKSCSKAEQERRKGIPWTEEEHRLFLLGLDKFGKGDWRSISRNFVISRTPTQVASHAQKYFIRLNSMNRDRRRSSIHDITSVTAGDQVAAQQGAPITGHQATGNPAAAALGPPGMKHHHHHHPGGAPPPMPMYSAAPMGHPVAGHMVPAAVGTPVVFPPGHAPYVVPVGYPAPPAKMHQ.

Positions 18 to 73 constitute a Myb-like domain; the sequence is WTREDDKAFENALAACAAPPPADGGAPDDDWFAALAASVPGARSAEEVRRHYEALV. Residues 72–86 carry the Nuclear export signal 1 motif; that stretch reads LVEDVAAIDAGRVPL. The disordered stretch occupies residues 89–142; sequence YAGEESAAPPDGAGAAAAASKDGGHRRDERKGGGGGYDGGKSCSKAEQERRKGI. Residues 92–109 show a composition bias toward low complexity; it reads EESAAPPDGAGAAAAASK. Composition is skewed to basic and acidic residues over residues 110-120 and 132-142; these read DGGHRRDERKG and SKAEQERRKGI. The short motif at 133 to 140 is the Nuclear localization signal 1 element; it reads KAEQERRK. Positions 136–192 constitute an HTH myb-type domain; sequence QERRKGIPWTEEEHRLFLLGLDKFGKGDWRSISRNFVISRTPTQVASHAQKYFIRLN. Residues 164-188 constitute a DNA-binding region (H-T-H motif); the sequence is WRSISRNFVISRTPTQVASHAQKYF. Residues 196–200 carry the Nuclear localization signal 2 motif; sequence RDRRR. The Nuclear export signal 2 motif lies at 203 to 215; it reads IHDITSVTAGDQV. Residues 228–241 show a composition bias toward low complexity; that stretch reads ATGNPAAAALGPPG. A disordered region spans residues 228 to 255; sequence ATGNPAAAALGPPGMKHHHHHHPGGAPP.

In terms of assembly, homodimer. Interacts with GAMYB. As to expression, expressed in aboveground tissues, with the highest level in leaves.

The protein localises to the nucleus. Its subcellular location is the cytoplasm. In terms of biological role, transcription activator that binds to 5'-TATCCA-3' elements in gene promoters. Derepresses strongly the sugar-repressed transcription of promoters containing SRS or 5'-TATCCA-3' elements. Functions with GAMYB to integrate diverse nutrient starvation and gibberellin (GA) signaling pathways during germination of grains. Sugar, nitrogen and phosphate starvation signals converge and interconnect with GA to promote the co-nuclear import of MYBS1 and GAMYB, resulting in the expression of a large set of GA-inducible hydrolases, transporters, and regulators that are essential for mobilization of nutrient reserves in the endosperm to support seedling growth. This chain is Transcription factor MYBS1, found in Oryza sativa subsp. japonica (Rice).